The primary structure comprises 351 residues: Peptide chain release factor 1 (351 aa).

Position 229 is an N5-methylglutamine (Q229).

The protein belongs to the prokaryotic/mitochondrial release factor family. Methylated by PrmC. Methylation increases the termination efficiency of RF1.

Its subcellular location is the cytoplasm. Its function is as follows. Peptide chain release factor 1 directs the termination of translation in response to the peptide chain termination codons UAG and UAA. The chain is Peptide chain release factor 1 from Cereibacter sphaeroides (strain ATCC 17029 / ATH 2.4.9) (Rhodobacter sphaeroides).